We begin with the raw amino-acid sequence, 173 residues long: Large ribosomal subunit protein uL10 (173 aa).

It belongs to the universal ribosomal protein uL10 family. In terms of assembly, part of the ribosomal stalk of the 50S ribosomal subunit. The N-terminus interacts with L11 and the large rRNA to form the base of the stalk. The C-terminus forms an elongated spine to which L12 dimers bind in a sequential fashion forming a multimeric L10(L12)X complex.

Functionally, forms part of the ribosomal stalk, playing a central role in the interaction of the ribosome with GTP-bound translation factors. The chain is Large ribosomal subunit protein uL10 from Desulfatibacillum aliphaticivorans.